The sequence spans 139 residues: MTHSLVCPETVSRVSSVLNRNTRQFGKKHLFDQDEETCWNSDQGPSQWVTLEFPQLIRVSQLQIQFQGGFSSRRGCLEGSQGTQALHKIVDFYPEDNNSLQTFPIPAAEVDRLKVTFEDATDFFGRVVIYHLRVLGEKV.

The protein belongs to the NR2C2AP family. As to quaternary structure, interacts with NR2C2/TR4. Expressed in all tissues examined, with highest expression in heart, skeletal muscle and pancreas.

It localises to the nucleus. Functionally, may act as a repressor of NR2C2-mediated transactivation by suppressing the binding between NR2C2/TR4 and the TR4-response element in target genes. The chain is Nuclear receptor 2C2-associated protein (NR2C2AP) from Homo sapiens (Human).